A 495-amino-acid chain; its full sequence is Protein painting of fourth (495 aa).

The disordered stretch occupies residues 1 to 51; the sequence is MDSKRAALESGDGPDAKRLDTTDDQDKEASGGDGSQVMLAKHVAPYTGHGC. The region spanning 215–289 is the RRM domain; that stretch reads CSLYVGNIPF…RTLTVRYRRL (75 aa). Residues 332–342 are compositionally biased toward low complexity; that stretch reads ISDSDNCSDSS. Disordered stretches follow at residues 332–358, 432–451, and 461–495; these read ISDSDNCSDSSGNGKEDGKRKKKINEQ, PVPATKPTTQAQDDSQKKAK, and GPFRRGTSAMKTADEYEKDDRLEELYAQLERDPDP. The segment covering 345–358 has biased composition (basic and acidic residues); sequence GKEDGKRKKKINEQ. The short motif at 351 to 367 is the Bipartite nuclear localization signal element; the sequence is RKKKINEQEREIEKLKR. Basic and acidic residues predominate over residues 472–495; the sequence is TADEYEKDDRLEELYAQLERDPDP.

Interacts with Zeste. As to expression, weakly expressed in embryos. Expression increases during larval and pupal stages. In adults, it is predominantly expressed in males, while it is weakly expressed in females.

Its subcellular location is the nucleus. It is found in the chromosome. Functionally, probable RNA-binding protein that specifically binds to the fourth chromosome and may bind an RNA that spreads the fourth chromosome. May be a reminiscence of X chromosome dosage compensation of ancestral Drosophila species in which the X and the fourth chromosomes are one single chromosome. The polypeptide is Protein painting of fourth (Pof) (Drosophila melanogaster (Fruit fly)).